The following is a 331-amino-acid chain: Septin homolog spn2 (331 aa).

The 273-residue stretch at 29-301 (RGFQFNVMVV…EKFRFKQLSS (273 aa)) folds into the Septin-type G domain. The segment at 39-46 (GPSGSGKS) is G1 motif. GTP is bound by residues 39 to 46 (GPSGSGKS), T73, G99, 179 to 187 (KSDSLTLEE), G235, and R250. Positions 96–99 (DTPG) are G3 motif. Residues 178–181 (AKSD) form a G4 motif region. Positions 311 to 331 (RMGSPAPVYPSEPHLHTATAQ) are disordered.

This sequence belongs to the TRAFAC class TrmE-Era-EngA-EngB-Septin-like GTPase superfamily. Septin GTPase family. As to quaternary structure, component of the septin complex composed of two copies of each spn1, spn2, spn3 and spn4. Component of the sporulation-specific septin complex composed of at least spn2, spn5, spn6 and spn7.

It localises to the cytoplasm. Its subcellular location is the cell cortex. The protein resides in the forespore membrane. Plays a role in the cell cycle. Involved in a late stage of septum formation leading to the separation of the daughter cells. Involved in the correct orientation of forespore membrane extension during sporulation. Binds phosphatidylinositol 4-phosphate. The polypeptide is Septin homolog spn2 (spn2) (Schizosaccharomyces pombe (strain 972 / ATCC 24843) (Fission yeast)).